We begin with the raw amino-acid sequence, 337 residues long: Protein FAM76B (337 aa).

Residues 143–241 (EQRKSLGSTH…INQSTDSGGT (99 aa)) form a disordered region. The span at 147-159 (SLGSTHSNSSSSS) shows a compositional bias: low complexity. The segment covering 166 to 187 (HHSKHHHHHHHHHRHSSSHHKI) has biased composition (basic residues). Over residues 213–222 (TPKKKPKLEF) the composition is skewed to basic and acidic residues. Positions 226–241 (NGDSSSINQSTDSGGT) are enriched in polar residues. A coiled-coil region spans residues 301–326 (KDFVEQLQGKNRELLKQVAALSKGKK).

It belongs to the FAM76 family.

In terms of biological role, plays a role in hematopoiesis and immune system development, and participates in the inflammatory response. The polypeptide is Protein FAM76B (fam76b) (Xenopus laevis (African clawed frog)).